Consider the following 100-residue polypeptide: NADH-quinone oxidoreductase subunit K (100 aa).

The next 3 membrane-spanning stretches (helical) occupy residues 4–24 (LSHG…GMII), 28–48 (LLFM…AFVV), and 60–80 (VMYI…LALL).

It belongs to the complex I subunit 4L family. In terms of assembly, NDH-1 is composed of 13 different subunits. Subunits NuoA, H, J, K, L, M, N constitute the membrane sector of the complex.

The protein resides in the cell inner membrane. It carries out the reaction a quinone + NADH + 5 H(+)(in) = a quinol + NAD(+) + 4 H(+)(out). NDH-1 shuttles electrons from NADH, via FMN and iron-sulfur (Fe-S) centers, to quinones in the respiratory chain. The immediate electron acceptor for the enzyme in this species is believed to be ubiquinone. Couples the redox reaction to proton translocation (for every two electrons transferred, four hydrogen ions are translocated across the cytoplasmic membrane), and thus conserves the redox energy in a proton gradient. This Sodalis glossinidius (strain morsitans) protein is NADH-quinone oxidoreductase subunit K.